Reading from the N-terminus, the 287-residue chain is Melatonin receptor type 1B-A (287 aa).

Residues Met-1–Pro-28 lie on the Extracellular side of the membrane. 2 N-linked (GlcNAc...) asparagine glycosylation sites follow: Asn-4 and Asn-10. A helical transmembrane segment spans residues Ala-29–Gly-49. The Cytoplasmic segment spans residues Asn-50–Ala-69. The chain crosses the membrane as a helical span at residues Phe-70 to Leu-90. Topologically, residues His-91 to Val-107 are extracellular. Cys-105 and Cys-182 are disulfide-bonded. Residues Ser-108–Ile-128 traverse the membrane as a helical segment. Residues Asn-129 to Thr-149 are Cytoplasmic-facing. A helical transmembrane segment spans residues Leu-150–Leu-170. The Extracellular segment spans residues Gly-171–Tyr-192. A helical transmembrane segment spans residues Thr-193 to Leu-213. The Cytoplasmic portion of the chain corresponds to Arg-214 to Met-245. Residues Phe-246–Val-266 form a helical membrane-spanning segment. At Ala-267–Pro-275 the chain is on the extracellular side. The helical transmembrane segment at Leu-276 to Phe-287 threads the bilayer.

Belongs to the G-protein coupled receptor 1 family.

It localises to the cell membrane. Its function is as follows. High affinity receptor for melatonin. The activity of this receptor is mediated by pertussis toxin sensitive G proteins that inhibits adenylate cyclase activity. The polypeptide is Melatonin receptor type 1B-A (mtnr1ba) (Danio rerio (Zebrafish)).